We begin with the raw amino-acid sequence, 331 residues long: Cytosolic Fe-S cluster assembly factor NBP35 (331 aa).

The span at Met1–Lys10 shows a compositional bias: polar residues. A disordered region spans residues Met1–Gly32. Cys21, Cys35, Cys38, and Cys44 together coordinate [4Fe-4S] cluster. Gly75–Ser82 provides a ligand contact to ATP. Residues Cys249 and Cys252 each contribute to the [4Fe-4S] cluster site.

Belongs to the Mrp/NBP35 ATP-binding proteins family. NUBP1/NBP35 subfamily. Heterotetramer of 2 NBP35 and 2 CFD1 chains. [4Fe-4S] cluster is required as a cofactor.

It is found in the cytoplasm. Its subcellular location is the nucleus. Component of the cytosolic iron-sulfur (Fe/S) protein assembly (CIA) machinery. Required for maturation of extramitochondrial Fe-S proteins. The NBP35-CFD1 heterotetramer forms a Fe-S scaffold complex, mediating the de novo assembly of an Fe-S cluster and its transfer to target apoproteins. Required for biogenesis and export of both ribosomal subunits, which may reflect a role in assembly of the Fe/S clusters in RLI1, a protein which performs rRNA processing and ribosome export. The sequence is that of Cytosolic Fe-S cluster assembly factor NBP35 from Candida albicans (strain SC5314 / ATCC MYA-2876) (Yeast).